Consider the following 518-residue polypeptide: Probable cytochrome P450 9h1 (518 aa).

Cys462 lines the heme pocket.

This sequence belongs to the cytochrome P450 family. Requires heme as cofactor.

It localises to the endoplasmic reticulum membrane. The protein resides in the microsome membrane. May be involved in the metabolism of insect hormones and in the breakdown of synthetic insecticides. This Drosophila melanogaster (Fruit fly) protein is Probable cytochrome P450 9h1 (Cyp9h1).